The primary structure comprises 693 residues: Putative tyrosinase-like protein tyr-3 (693 aa).

The N-terminal stretch at 1–18 (MIRYIILLVYFLIFEVNS) is a signal peptide. The Cu cation site is built by histidine 142, histidine 152, histidine 161, histidine 281, histidine 285, and histidine 308. ShKT domains are found at residues 472-506 (CFNE…CRQC), 516-550 (CSDR…CQKC), 591-625 (CYNE…CGVC), and 634-667 (CADY…CNTC). 12 disulfides stabilise this stretch: cysteine 472–cysteine 506, cysteine 479–cysteine 499, cysteine 488–cysteine 503, cysteine 516–cysteine 550, cysteine 523–cysteine 543, cysteine 532–cysteine 547, cysteine 591–cysteine 625, cysteine 598–cysteine 618, cysteine 607–cysteine 622, cysteine 634–cysteine 667, cysteine 641–cysteine 660, and cysteine 650–cysteine 664.

This sequence belongs to the tyrosinase family. Cu(2+) serves as cofactor.

In Caenorhabditis elegans, this protein is Putative tyrosinase-like protein tyr-3 (tyr-3).